Reading from the N-terminus, the 522-residue chain is MKLPKHLKFAAGAGGAFLFGILFGWVMFPAILKGQLKKEMALSKKTDVRKMWETIPFALNFKVYLYNYTNPEEVQKGGVPIIKEVGPYHFDEWKEKVEIEDHEEDDTITYKKRDTFYFNQEKSGPGLTGEEVITMPHVFMLAMATVVSREKPAMMNMIGKAINGIFDNPADVFIRVKALDIMFRGTMINCARTEFAPKAVCTALKKEAVNGLVMEPNNQFRFSLFGSRNGTIDPHVVTVKRGIKNVMDVGQVVAIDGKPQQDVWRDHCNEYQGTDGTVFPPFLTEHDRLQSFSGDLCRSFKPWYQKKSFYRGITTHRYIANIGDFANDPELNCFCDGPCPPKGLMDLMKCMKAPMYASMPHFLDSDPELLKNVKGLNPDVNEHGIEIDFEPISGTPMVANQRVQFNMQLLKHDKVELLNNLPDTIVPLFWIDEGLALNKTFVNMLKFQLFYPKKAVGVIKWLLVTFGGFGLIGCTIYHYKDRIMSFASSPGSAAVTKVKPEEVEQKDVSVIGQPQEPAKINM.

Topologically, residues 1-11 (MKLPKHLKFAA) are cytoplasmic. A helical membrane pass occupies residues 12 to 32 (GAGGAFLFGILFGWVMFPAIL). The Extracellular segment spans residues 33 to 455 (KGQLKKEMAL…KFQLFYPKKA (423 aa)). Residues Asn67 and Asn229 are each glycosylated (N-linked (GlcNAc...) asparagine). Disulfide bonds link Cys268/Cys333, Cys297/Cys350, and Cys335/Cys339. Asn438 is a glycosylation site (N-linked (GlcNAc...) asparagine). Residues 456-476 (VGVIKWLLVTFGGFGLIGCTI) form a helical membrane-spanning segment. The Cytoplasmic portion of the chain corresponds to 477–522 (YHYKDRIMSFASSPGSAAVTKVKPEEVEQKDVSVIGQPQEPAKINM).

It belongs to the CD36 family.

Its subcellular location is the cell membrane. Plays an olfactory role that is not restricted to pheromone sensitivity. This Plutella xylostella (Diamondback moth) protein is Sensory neuron membrane protein 1.